Reading from the N-terminus, the 59-residue chain is Large ribosomal subunit protein uL30 (59 aa).

This sequence belongs to the universal ribosomal protein uL30 family. Part of the 50S ribosomal subunit.

In Hydrogenobaculum sp. (strain Y04AAS1), this protein is Large ribosomal subunit protein uL30.